The following is a 1086-amino-acid chain: Sterol regulatory element-binding protein cleavage-activating protein (1086 aa).

Residues 1-35 are Cytoplasmic-facing; sequence MRIFTLGKGRISRGYARQVNPSLFAKYSYCIANNP. A helical transmembrane segment spans residues 36–56; it reads WYFILVFTLLSITGIYSSLVA. Residues 57–229 are Lumenal-facing; the sequence is YQQSLYDQSL…TVVARIPDLT (173 aa). Asn-94 and Asn-168 each carry an N-linked (GlcNAc...) asparagine glycan. Residues 230–250 traverse the membrane as a helical segment; it reads VIYRWYLWVGFGVGLFAYLYL. Positions 233–391 constitute an SSD domain; it reads RWYLWVGFGV…GSFFLAVLSV (159 aa). Over 251-265 the chain is Cytoplasmic; that stretch reads SLVRLHDIRAKFGLT. A helical transmembrane segment spans residues 266 to 286; the sequence is ATIFIQSGTAYFSTCSLLYFF. The Lumenal segment spans residues 287-290; the sequence is ERTG. A helical transmembrane segment spans residues 291-311; it reads PICPWPMAYYIIIFMDIENSF. At 312–337 the chain is on the cytoplasmic side; that stretch reads RLLRAVIASPQTKRVPSRIMEGFSST. The helical transmembrane segment at 338-358 threads the bilayer; sequence IIASFSSLLKKLLTLFVLSFF. At 359-367 the chain is on the lumenal side; that stretch reads VYPLVQEFC. Residues 368–388 traverse the membrane as a helical segment; it reads LFLACSFVVSFLLHGSFFLAV. Residues 389–422 are Cytoplasmic-facing; sequence LSVDIRRLELQDFLDSNSSNRNSKWWVPYLEYVR. The ER export signal signature appears at 396-401; it reads LELQDF. A helical transmembrane segment spans residues 423 to 443; it reads FMWSPWIIDNLGTVSFHMYVI. Topologically, residues 444–544 are lumenal; the sequence is YLQLQSSTDI…FHDRRVWRWS (101 aa). N-linked (GlcNAc...) asparagine glycosylation is present at Asn-454. A helical membrane pass occupies residues 545 to 565; that stretch reads TFFSILFAIDFAVGLLVKALL. The Cytoplasmic portion of the chain corresponds to 566-1086; it reads RGWSDHDELS…QRKRSGTIGC (521 aa). WD repeat units lie at residues 593 to 632, 637 to 675, 680 to 727, 736 to 776, and 963 to 1009; these read HHQL…TKLV, QMPR…LMLQ, CKPN…EGAD, LSSP…WSPK, and GHYN…KKHR. Positions 640–1086 are interaction with sre1; that stretch reads RTLKAIALDP…QRKRSGTIGC (447 aa).

It belongs to the WD repeat SCAP family. As to quaternary structure, forms a tight complex with scp1, composed of 4 copies of scp1 and 4 copies of sre1.

Its subcellular location is the endoplasmic reticulum membrane. It localises to the golgi apparatus membrane. Functionally, escort protein required for sre1 processing at low sterol as well as oxygen levels. May regulate export of the scp1/sre1 complex from the ER at low sterol or oxygen levels. 4-methyl sterols bound to scp1 may mask an ER export signal in scp1 leading to retention of the complex in the ER. Release of 4-methyl sterols may trigger a conformational change in the SSD domain of scp1 unmasking the ER export signal leading to recruitment into COPII-coated vesicles, transport to the Golgi complex, proteolytic cleavage of sre1 in the Golgi, release of the transcription factor fragment of sre1 from the membrane, its import into the nucleus and up-regulation of genes required for ergosterol biosynthesis as well as anaerobic growth. Binds 4-methyl sterols. The protein is Sterol regulatory element-binding protein cleavage-activating protein of Schizosaccharomyces pombe (strain 972 / ATCC 24843) (Fission yeast).